We begin with the raw amino-acid sequence, 103 residues long: Small ribosomal subunit protein uS10 (103 aa).

Belongs to the universal ribosomal protein uS10 family. In terms of assembly, part of the 30S ribosomal subunit.

Involved in the binding of tRNA to the ribosomes. This is Small ribosomal subunit protein uS10 from Neisseria meningitidis serogroup C / serotype 2a (strain ATCC 700532 / DSM 15464 / FAM18).